A 437-amino-acid chain; its full sequence is 3-phosphoshikimate 1-carboxyvinyltransferase (437 aa).

3-phosphoshikimate-binding residues include Lys-24, Ser-25, and Arg-29. Position 24 (Lys-24) interacts with phosphoenolpyruvate. The phosphoenolpyruvate site is built by Gly-95 and Arg-123. The 3-phosphoshikimate site is built by Ser-168, Gln-170, Asp-317, and Lys-344. A phosphoenolpyruvate-binding site is contributed by Gln-170. Residue Asp-317 is the Proton acceptor of the active site. 2 residues coordinate phosphoenolpyruvate: Arg-348 and Arg-390.

Belongs to the EPSP synthase family. In terms of assembly, monomer.

It is found in the cytoplasm. The enzyme catalyses 3-phosphoshikimate + phosphoenolpyruvate = 5-O-(1-carboxyvinyl)-3-phosphoshikimate + phosphate. Its pathway is metabolic intermediate biosynthesis; chorismate biosynthesis; chorismate from D-erythrose 4-phosphate and phosphoenolpyruvate: step 6/7. In terms of biological role, catalyzes the transfer of the enolpyruvyl moiety of phosphoenolpyruvate (PEP) to the 5-hydroxyl of shikimate-3-phosphate (S3P) to produce enolpyruvyl shikimate-3-phosphate and inorganic phosphate. The protein is 3-phosphoshikimate 1-carboxyvinyltransferase of Wolinella succinogenes (strain ATCC 29543 / DSM 1740 / CCUG 13145 / JCM 31913 / LMG 7466 / NCTC 11488 / FDC 602W) (Vibrio succinogenes).